A 175-amino-acid polypeptide reads, in one-letter code: ATP synthase subunit b (175 aa).

A helical membrane pass occupies residues Leu-20–Trp-40.

It belongs to the ATPase B chain family. As to quaternary structure, F-type ATPases have 2 components, F(1) - the catalytic core - and F(0) - the membrane proton channel. F(1) has five subunits: alpha(3), beta(3), gamma(1), delta(1), epsilon(1). F(0) has four main subunits: a(1), b(2) and c(10-14). The alpha and beta chains form an alternating ring which encloses part of the gamma chain. F(1) is attached to F(0) by a central stalk formed by the gamma and epsilon chains, while a peripheral stalk is formed by the delta and b chains.

It localises to the cell inner membrane. Its function is as follows. F(1)F(0) ATP synthase produces ATP from ADP in the presence of a proton or sodium gradient. F-type ATPases consist of two structural domains, F(1) containing the extramembraneous catalytic core and F(0) containing the membrane proton channel, linked together by a central stalk and a peripheral stalk. During catalysis, ATP synthesis in the catalytic domain of F(1) is coupled via a rotary mechanism of the central stalk subunits to proton translocation. Functionally, component of the F(0) channel, it forms part of the peripheral stalk, linking F(1) to F(0). In Pelodictyon phaeoclathratiforme (strain DSM 5477 / BU-1), this protein is ATP synthase subunit b.